Consider the following 628-residue polypeptide: Methionine--tRNA ligase (628 aa).

The short motif at 9 to 19 is the 'HIGH' region element; that stretch reads YYVNDVPHLGH. Residues cysteine 124, cysteine 127, cysteine 142, and cysteine 145 each coordinate Zn(2+). The 'KMSKS' region motif lies at 294–298; it reads KMSKS. Lysine 297 lines the ATP pocket. The tRNA-binding domain maps to 527 to 628; sequence DFAKIEIKVA…QLVQNGSLVG (102 aa).

It belongs to the class-I aminoacyl-tRNA synthetase family. MetG type 2A subfamily. In terms of assembly, homodimer. Zn(2+) serves as cofactor.

Its subcellular location is the cytoplasm. It catalyses the reaction tRNA(Met) + L-methionine + ATP = L-methionyl-tRNA(Met) + AMP + diphosphate. In terms of biological role, is required not only for elongation of protein synthesis but also for the initiation of all mRNA translation through initiator tRNA(fMet) aminoacylation. The chain is Methionine--tRNA ligase (metG) from Campylobacter jejuni subsp. jejuni serotype O:2 (strain ATCC 700819 / NCTC 11168).